Here is a 595-residue protein sequence, read N- to C-terminus: Aspartate--tRNA(Asp/Asn) ligase (595 aa).

E175 contributes to the L-aspartate binding site. The interval 199-202 (QQYK) is aspartate. The L-aspartate site is built by R221 and H454. ATP is bound at residue 221–223 (RDE). ATP is bound at residue E488. R495 serves as a coordination point for L-aspartate. 540–543 (GIDR) is a binding site for ATP.

This sequence belongs to the class-II aminoacyl-tRNA synthetase family. Type 1 subfamily. Homodimer.

The protein resides in the cytoplasm. The catalysed reaction is tRNA(Asx) + L-aspartate + ATP = L-aspartyl-tRNA(Asx) + AMP + diphosphate. Functionally, aspartyl-tRNA synthetase with relaxed tRNA specificity since it is able to aspartylate not only its cognate tRNA(Asp) but also tRNA(Asn). Reaction proceeds in two steps: L-aspartate is first activated by ATP to form Asp-AMP and then transferred to the acceptor end of tRNA(Asp/Asn). This is Aspartate--tRNA(Asp/Asn) ligase from Brucella abortus (strain S19).